Here is a 1012-residue protein sequence, read N- to C-terminus: Centriole and centriolar satellite protein OFD1 (1012 aa).

Residues 70-102 (LIGASNSLVADHLQRCGYEYSLSVFFPESGLAK) enclose the LisH domain. Coiled coils occupy residues 189–557 (QRIK…ENEV) and 622–662 (DSDL…NSAK). The segment at 609-665 (TNYPTAWVEGSSPDSDLEFVANTKARVKELQQEAERLEKAFRSYHRRVIKNSAKSPL) is mediates homooligomerization. The interval 615 to 1012 (WVEGSSPDSD…FSHEELDDSW (398 aa)) is mediates the interaction with SDCCAG8. Phosphoserine is present on residues serine 663, serine 669, serine 686, and serine 720. The tract at residues 719-744 (GSAASRLRGGTSSRRLSSTPLPKAKR) is disordered. The span at 720-737 (SAASRLRGGTSSRRLSST) shows a compositional bias: low complexity. At serine 735 the chain carries Phosphoserine; by PKA. Serine 745, serine 774, serine 789, and serine 811 each carry phosphoserine. The segment at 757 to 794 (RSHIASPSPCPDRMPLPSPTESRHSLSIPPVSSPPEQK) is disordered. The span at 764–774 (SPCPDRMPLPS) shows a compositional bias: pro residues. Disordered regions lie at residues 824–904 (FESS…LQEV) and 963–1012 (KIIQ…DDSW). Positions 867 to 956 (SVDQKQIEEQ…IKDKSAHSEN (90 aa)) form a coiled coil. Composition is skewed to basic and acidic residues over residues 871–904 (KQIE…LQEV) and 973–982 (SADKSSKKMV).

This sequence belongs to the OFD1 family. As to quaternary structure, homooligomer. Interacts with LCA5. Interacts with RUVBL1; the interaction is direct and may mediate interaction with the NuA4 histone acetyltransferase complex. Interacts with SDCCAG8; the interaction is direct. Interacts with MAP1LC3B. Interacts with C2CD3; OFD1 may act as a negative regulator of C2CD3. Forms a complex with KIAA0753/OFIP and CEP20/FOR20; the interaction with CEP20 is detected only in the presence of KIAA0753. Interacts with PCM1; this interaction may be mediated by KIAA0753/OFIP. Interacts with TBC1D31; regulates OFD1 activity in cilium assembly. Post-translationally, phosphorylated. Phosphorylation at Ser-735, by the cAMP-dependent protein kinase PKA, triggers ubiquitination and proteasomal degradation of OFD1. Also increases its interaction with TBC1D31 and regulates its function in ciliogenesis. In terms of processing, ubiquitinated by PJA2, upon phosphorylation at Ser-735 by PKA, leads to the proteasomal degradation of OFD1. Widely expressed. Expressed in 9 and 14 weeks old embryos in metanephric mesenchyme, oral mucosa, lung, heart, nasal and cranial cartilage, and brain. Expressed in metanephros, brain, tongue, and limb.

Its subcellular location is the cytoplasm. It localises to the cytoskeleton. It is found in the microtubule organizing center. The protein resides in the centrosome. The protein localises to the centriole. Its subcellular location is the cilium basal body. It localises to the nucleus. It is found in the centriolar satellite. Functionally, component of the centrioles controlling mother and daughter centrioles length. Recruits to the centriole IFT88 and centriole distal appendage-specific proteins including CEP164. Involved in the biogenesis of the cilium, a centriole-associated function. The cilium is a cell surface projection found in many vertebrate cells required to transduce signals important for development and tissue homeostasis. Plays an important role in development by regulating Wnt signaling and the specification of the left-right axis. Only OFD1 localized at the centriolar satellites is removed by autophagy, which is an important step in the ciliogenesis regulation. This Homo sapiens (Human) protein is Centriole and centriolar satellite protein OFD1 (OFD1).